Consider the following 208-residue polypeptide: Small ribosomal subunit protein uS4 (208 aa).

The 61-residue stretch at 98–158 (RRLDNIAYRL…EKSRKVACIN (61 aa)) folds into the S4 RNA-binding domain.

The protein belongs to the universal ribosomal protein uS4 family. In terms of assembly, part of the 30S ribosomal subunit. Contacts protein S5. The interaction surface between S4 and S5 is involved in control of translational fidelity.

Functionally, one of the primary rRNA binding proteins, it binds directly to 16S rRNA where it nucleates assembly of the body of the 30S subunit. Its function is as follows. With S5 and S12 plays an important role in translational accuracy. This is Small ribosomal subunit protein uS4 from Geotalea uraniireducens (strain Rf4) (Geobacter uraniireducens).